The sequence spans 170 residues: Peptide deformylase (170 aa).

The Fe cation site is built by Cys-91 and His-133. Residue Glu-134 is part of the active site. His-137 provides a ligand contact to Fe cation.

It belongs to the polypeptide deformylase family. It depends on Fe(2+) as a cofactor.

It carries out the reaction N-terminal N-formyl-L-methionyl-[peptide] + H2O = N-terminal L-methionyl-[peptide] + formate. Functionally, removes the formyl group from the N-terminal Met of newly synthesized proteins. Requires at least a dipeptide for an efficient rate of reaction. N-terminal L-methionine is a prerequisite for activity but the enzyme has broad specificity at other positions. This is Peptide deformylase from Pasteurella multocida (strain Pm70).